Consider the following 968-residue polypeptide: RNA polymerase-associated protein RapA (968 aa).

The region spanning 164-334 is the Helicase ATP-binding domain; that stretch reads DVGRRHAPRV…FARLRLLDPN (171 aa). 177 to 184 serves as a coordination point for ATP; it reads DEVGLGKT. Positions 280–283 match the DEAH box motif; the sequence is DEAH. The Helicase C-terminal domain maps to 490–662; that stretch reads RVEWLMGYLT…YLASPDQTEG (173 aa).

The protein belongs to the SNF2/RAD54 helicase family. RapA subfamily. As to quaternary structure, interacts with the RNAP. Has a higher affinity for the core RNAP than for the holoenzyme. Its ATPase activity is stimulated by binding to RNAP.

Its function is as follows. Transcription regulator that activates transcription by stimulating RNA polymerase (RNAP) recycling in case of stress conditions such as supercoiled DNA or high salt concentrations. Probably acts by releasing the RNAP, when it is trapped or immobilized on tightly supercoiled DNA. Does not activate transcription on linear DNA. Probably not involved in DNA repair. The sequence is that of RNA polymerase-associated protein RapA from Escherichia fergusonii (strain ATCC 35469 / DSM 13698 / CCUG 18766 / IAM 14443 / JCM 21226 / LMG 7866 / NBRC 102419 / NCTC 12128 / CDC 0568-73).